The following is a 171-amino-acid chain: T-cell surface glycoprotein CD3 delta chain (171 aa).

A signal peptide spans 1 to 21 (MEHSRFLSGLILAAFLSRVSP). Residues 22 to 104 (YEVEMEELED…NCVELDSATL (83 aa)) lie on the Extracellular side of the membrane. A disulfide bridge links Cys37 with Cys72. N-linked (GlcNAc...) asparagine glycosylation is present at Asn38. A helical membrane pass occupies residues 105–125 (AGIIVTDIIATLLLALGVYCF). Topologically, residues 126 to 171 (AGHEMGRFSRAADTQDLLRNDQLYQPLRDRNDGQYSRLGENWARNK) are cytoplasmic. Residues 138 to 166 (DTQDLLRNDQLYQPLRDRNDGQYSRLGEN) enclose the ITAM domain. 2 positions are modified to phosphotyrosine: Tyr149 and Tyr160.

In terms of assembly, the TCR-CD3 complex is composed of a CD3D/CD3E and a CD3G/CD3E heterodimers that preferentially associate with TCRalpha and TCRbeta, respectively, to form TCRalpha/CD3E/CD3G and TCRbeta/CD3G/CD3E trimers. In turn, the hexamer interacts with CD3Z homodimer to form the TCR-CD3 complex. Alternatively, TCRalpha and TCRbeta can be replaced by TCRgamma and TCRdelta. Interacts with coreceptors CD4 and CD8. Post-translationally, phosphorylated on Tyr residues after T-cell receptor triggering by LCK in association with CD4/CD8. In terms of tissue distribution, CD3D is mostly present on T-lymphocytes with its TCR-CD3 partners. Present also in fetal NK-cells.

Its subcellular location is the cell membrane. Its function is as follows. Part of the TCR-CD3 complex present on T-lymphocyte cell surface that plays an essential role in adaptive immune response. When antigen presenting cells (APCs) activate T-cell receptor (TCR), TCR-mediated signals are transmitted across the cell membrane by the CD3 chains CD3D, CD3E, CD3G and CD3Z. All CD3 chains contain immunoreceptor tyrosine-based activation motifs (ITAMs) in their cytoplasmic domain. Upon TCR engagement, these motifs become phosphorylated by Src family protein tyrosine kinases LCK and FYN, resulting in the activation of downstream signaling pathways. In addition of this role of signal transduction in T-cell activation, CD3D plays an essential role in thymocyte differentiation. Indeed, participates in correct intracellular TCR-CD3 complex assembly and surface expression. In absence of a functional TCR-CD3 complex, thymocytes are unable to differentiate properly. Interacts with CD4 and CD8 and thus serves to establish a functional link between the TCR and coreceptors CD4 and CD8, which is needed for activation and positive selection of CD4 or CD8 T-cells. The polypeptide is T-cell surface glycoprotein CD3 delta chain (CD3D) (Sus scrofa (Pig)).